Consider the following 217-residue polypeptide: U exon protein (217 aa).

2 disordered regions span residues 68 to 110 (SKIF…TNHG) and 170 to 217 (EKEA…RQGR). The segment covering 202–217 (GGFQQPTGANQARQGR) has biased composition (polar residues).

The protein belongs to the adenoviridae U exon protein family.

Its subcellular location is the host nucleus. The protein resides in the host nucleoplasm. The protein localises to the host nucleolus. Functionally, might play a role in viral replication since it is associated with viral replication centers. Seems to have an effect on DBP localization. This is U exon protein from Homo sapiens (Human).